Consider the following 60-residue polypeptide: uncharacterized protein (60 aa).

The chain crosses the membrane as a helical span at residues 38 to 58 (SILAGGIIPVLFFFPLFLFLY).

It is found in the membrane. This is an uncharacterized protein from Saccharomyces cerevisiae (strain ATCC 204508 / S288c) (Baker's yeast).